Consider the following 67-residue polypeptide: MSSLKYANTDITIKMVIITPKVLEDDSLSESSIHFANNRFHFDLYYIKPWAFVSILYLFLCFLYNII.

This is an uncharacterized protein from Fowlpox virus (strain NVSL) (FPV).